The primary structure comprises 252 residues: Thiazole synthase (252 aa).

The active-site Schiff-base intermediate with DXP is the Lys-91. Residues Gly-152, 179–180 (AG), and 201–202 (NT) contribute to the 1-deoxy-D-xylulose 5-phosphate site.

It belongs to the ThiG family. As to quaternary structure, homotetramer. Forms heterodimers with either ThiH or ThiS.

It localises to the cytoplasm. The enzyme catalyses [ThiS sulfur-carrier protein]-C-terminal-Gly-aminoethanethioate + 2-iminoacetate + 1-deoxy-D-xylulose 5-phosphate = [ThiS sulfur-carrier protein]-C-terminal Gly-Gly + 2-[(2R,5Z)-2-carboxy-4-methylthiazol-5(2H)-ylidene]ethyl phosphate + 2 H2O + H(+). It functions in the pathway cofactor biosynthesis; thiamine diphosphate biosynthesis. Functionally, catalyzes the rearrangement of 1-deoxy-D-xylulose 5-phosphate (DXP) to produce the thiazole phosphate moiety of thiamine. Sulfur is provided by the thiocarboxylate moiety of the carrier protein ThiS. In vitro, sulfur can be provided by H(2)S. The protein is Thiazole synthase of Erwinia amylovora (Fire blight bacteria).